We begin with the raw amino-acid sequence, 488 residues long: MNEALKSLTVTGKERYKSGVLEYKRMGYWEPDYEPKDTDVIALFRVTPQNGVDPIEASAAVAGESSTATWTVVWTDRLTAAEKYRAKCYRVDPVPNTPGSYFAYIAYDLDLFEPGSIANLSASIIGNVFGFKPLKALRLEDMRFPVAYVKTFQGPATGIVVERERLDKFGRPLLGATVKPKLGLSGRNYGRVVYEALKGGLDFTKDDENTNSQPFMHWRDRFLYCMEAVNKAQAATGEVKGTYLNVTAATMEDMYERAEFAKELGSVIIMIDLVIGYTAIQSMAKWARRNDMILHLHRAGHGTYTRQKSHGVSFRVIAKWMRLAGVDHIHAGTVVGKLEGDPNTTRGYYDICREDHNPMALEYGLFFEQHWASLNKLMPVASGGIHAGQMHQLLNYLGEDVVLQFGGGTIGHPLGIQAGATANRVALEAMILARNEGRDYVHEGPEILAKAAATCTPLKQALDVWKNVTFNYDSTDTPDFVPTAAVTA.

Substrate contacts are provided by Asn127 and Thr177. Lys179 (proton acceptor) is an active-site residue. Lys181 provides a ligand contact to substrate. Mg(2+) contacts are provided by Lys205, Asp207, and Glu208. Lys205 carries the N6-carboxylysine modification. Catalysis depends on His297, which acts as the Proton acceptor. Positions 298, 330, and 382 each coordinate substrate.

This sequence belongs to the RuBisCO large chain family. Type I subfamily. Heterohexadecamer of 8 large chains and 8 small chains. The cofactor is Mg(2+).

The catalysed reaction is 2 (2R)-3-phosphoglycerate + 2 H(+) = D-ribulose 1,5-bisphosphate + CO2 + H2O. It catalyses the reaction D-ribulose 1,5-bisphosphate + O2 = 2-phosphoglycolate + (2R)-3-phosphoglycerate + 2 H(+). RuBisCO catalyzes two reactions: the carboxylation of D-ribulose 1,5-bisphosphate, the primary event in carbon dioxide fixation, as well as the oxidative fragmentation of the pentose substrate. Both reactions occur simultaneously and in competition at the same active site. This is Ribulose bisphosphate carboxylase large chain 1 from Bradyrhizobium sp. (strain BTAi1 / ATCC BAA-1182).